The following is a 344-amino-acid chain: N-acetyl-gamma-glutamyl-phosphate reductase (344 aa).

Cys-150 is a catalytic residue.

This sequence belongs to the NAGSA dehydrogenase family. Type 1 subfamily.

It localises to the cytoplasm. It carries out the reaction N-acetyl-L-glutamate 5-semialdehyde + phosphate + NADP(+) = N-acetyl-L-glutamyl 5-phosphate + NADPH + H(+). It participates in amino-acid biosynthesis; L-arginine biosynthesis; N(2)-acetyl-L-ornithine from L-glutamate: step 3/4. Catalyzes the NADPH-dependent reduction of N-acetyl-5-glutamyl phosphate to yield N-acetyl-L-glutamate 5-semialdehyde. The sequence is that of N-acetyl-gamma-glutamyl-phosphate reductase from Pseudomonas putida (strain ATCC 700007 / DSM 6899 / JCM 31910 / BCRC 17059 / LMG 24140 / F1).